We begin with the raw amino-acid sequence, 114 residues long: Photosystem II reaction center Psb28 protein (114 aa).

It belongs to the Psb28 family. As to quaternary structure, part of the photosystem II complex.

It localises to the plastid. The protein localises to the chloroplast thylakoid membrane. The protein is Photosystem II reaction center Psb28 protein of Gracilaria tenuistipitata var. liui (Red alga).